Reading from the N-terminus, the 602-residue chain is Elongation factor 4 (602 aa).

Residues 2 to 184 form the tr-type G domain; the sequence is NHIRNFSIIA…QIVAKVPAPR (183 aa). Residues 14–19 and 131–134 contribute to the GTP site; these read DHGKST and NKMD.

It belongs to the TRAFAC class translation factor GTPase superfamily. Classic translation factor GTPase family. LepA subfamily.

Its subcellular location is the cell inner membrane. The enzyme catalyses GTP + H2O = GDP + phosphate + H(+). Required for accurate and efficient protein synthesis under certain stress conditions. May act as a fidelity factor of the translation reaction, by catalyzing a one-codon backward translocation of tRNAs on improperly translocated ribosomes. Back-translocation proceeds from a post-translocation (POST) complex to a pre-translocation (PRE) complex, thus giving elongation factor G a second chance to translocate the tRNAs correctly. Binds to ribosomes in a GTP-dependent manner. In Acidovorax ebreus (strain TPSY) (Diaphorobacter sp. (strain TPSY)), this protein is Elongation factor 4.